Reading from the N-terminus, the 328-residue chain is Putative glycosyltransferase 41 (328 aa).

The protein belongs to the glycosyltransferase group 1 family. Glycosyltransferase 4 subfamily.

This Sulfolobus islandicus filamentous virus (isolate Iceland/Hveragerdi) (SIFV) protein is Putative glycosyltransferase 41 (SIFV0041).